The chain runs to 186 residues: Ribosome-recycling factor (186 aa).

This sequence belongs to the RRF family.

Its subcellular location is the cytoplasm. Its function is as follows. Responsible for the release of ribosomes from messenger RNA at the termination of protein biosynthesis. May increase the efficiency of translation by recycling ribosomes from one round of translation to another. This chain is Ribosome-recycling factor, found in Ralstonia pickettii (strain 12J).